A 204-amino-acid polypeptide reads, in one-letter code: High frequency lysogenization protein HflD homolog (204 aa).

It belongs to the HflD family.

It is found in the cytoplasm. It localises to the cell inner membrane. The chain is High frequency lysogenization protein HflD homolog from Shewanella amazonensis (strain ATCC BAA-1098 / SB2B).